The chain runs to 314 residues: tRNA pseudouridine synthase B (314 aa).

H43 contributes to the substrate binding site. Catalysis depends on D48, which acts as the Nucleophile. Substrate-binding residues include Y76, Y179, and L200.

It belongs to the pseudouridine synthase TruB family. Type 1 subfamily.

The catalysed reaction is uridine(55) in tRNA = pseudouridine(55) in tRNA. In terms of biological role, responsible for synthesis of pseudouridine from uracil-55 in the psi GC loop of transfer RNAs. In Pectobacterium atrosepticum (strain SCRI 1043 / ATCC BAA-672) (Erwinia carotovora subsp. atroseptica), this protein is tRNA pseudouridine synthase B.